The chain runs to 699 residues: tRNA 5-methylaminomethyl-2-thiouridine biosynthesis bifunctional protein MnmC (699 aa).

The tract at residues 1–247 is tRNA (mnm(5)s(2)U34)-methyltransferase; it reads MPAVSRPLPP…KREMLCGEIA (247 aa). The segment at 275–699 is FAD-dependent cmnm(5)s(2)U34 oxidoreductase; sequence IGAGLAGTSV…QPSPTTTETP (425 aa). A disordered region spans residues 675 to 699; that stretch reads RGNATLSTSSPNDDAQPSPTTTETP.

The protein in the N-terminal section; belongs to the methyltransferase superfamily. tRNA (mnm(5)s(2)U34)-methyltransferase family. This sequence in the C-terminal section; belongs to the DAO family. FAD is required as a cofactor.

It is found in the cytoplasm. It catalyses the reaction 5-aminomethyl-2-thiouridine(34) in tRNA + S-adenosyl-L-methionine = 5-methylaminomethyl-2-thiouridine(34) in tRNA + S-adenosyl-L-homocysteine + H(+). Functionally, catalyzes the last two steps in the biosynthesis of 5-methylaminomethyl-2-thiouridine (mnm(5)s(2)U) at the wobble position (U34) in tRNA. Catalyzes the FAD-dependent demodification of cmnm(5)s(2)U34 to nm(5)s(2)U34, followed by the transfer of a methyl group from S-adenosyl-L-methionine to nm(5)s(2)U34, to form mnm(5)s(2)U34. The sequence is that of tRNA 5-methylaminomethyl-2-thiouridine biosynthesis bifunctional protein MnmC from Chromohalobacter salexigens (strain ATCC BAA-138 / DSM 3043 / CIP 106854 / NCIMB 13768 / 1H11).